Reading from the N-terminus, the 195-residue chain is Imidazoleglycerol-phosphate dehydratase (195 aa).

The protein belongs to the imidazoleglycerol-phosphate dehydratase family.

Its subcellular location is the cytoplasm. It catalyses the reaction D-erythro-1-(imidazol-4-yl)glycerol 3-phosphate = 3-(imidazol-4-yl)-2-oxopropyl phosphate + H2O. Its pathway is amino-acid biosynthesis; L-histidine biosynthesis; L-histidine from 5-phospho-alpha-D-ribose 1-diphosphate: step 6/9. The protein is Imidazoleglycerol-phosphate dehydratase of Bacillus cytotoxicus (strain DSM 22905 / CIP 110041 / 391-98 / NVH 391-98).